Here is an 807-residue protein sequence, read N- to C-terminus: uncharacterized protein (807 aa).

An N-terminal signal peptide occupies residues 1-18; the sequence is MNTVLFVILLAAIGSNHG. At 19–704 the chain is on the extracellular side; it reads LIDERLTVNR…GLFTDIFGGE (686 aa). Positions 133 to 142 are enriched in polar residues; it reads TTTTAAPQTG. The segment at 133–171 is disordered; that stretch reads TTTTAAPQTGNRRRRRAAGDEPNTDDNTPPNLEIPDWLD. Residues Asn-277 and Asn-660 are each glycosylated (N-linked (GlcNAc...) asparagine; by host). A helical membrane pass occupies residues 705–725; sequence VWAVIAAIFSPVFLTAFALII. Over 726–807 the chain is Cytoplasmic; sequence SLINFIPAVR…GERQVISRTN (82 aa).

The protein resides in the host membrane. This is an uncharacterized protein from Magallana gigas (Pacific oyster).